The sequence spans 159 residues: U1 small nuclear ribonucleoprotein C (159 aa).

A Matrin-type zinc finger spans residues 4-36; that stretch reads FYCDYCDTYLTHDSPSVRKTHCSGRKHKENVKD. 2 disordered regions span residues 63–95 and 139–159; these read PPTP…MPAP and MRPP…RPDR. Pro residues predominate over residues 77–95; it reads IPPPPSLGGPPRPGMMPAP.

The protein belongs to the U1 small nuclear ribonucleoprotein C family. As to quaternary structure, component of the U1 snRNP. The U1 snRNP is composed of the U1 snRNA and the 7 core Sm proteins snrpb, snrpd1, snrpd2, snrpd3, snrpe, snrpf and snrpg that assemble in a heptameric protein ring on the Sm site of the small nuclear RNA to form the core snRNP, and at least 3 U1 snRNP-specific proteins snrnp70/U1-70K, snrpa/U1-A and snrpc/U1-C. snrpc/U1-C interacts with U1 snRNA and the 5' splice-site region of the pre-mRNA.

It localises to the nucleus. Its function is as follows. Component of the spliceosomal U1 snRNP, which is essential for recognition of the pre-mRNA 5' splice-site and the subsequent assembly of the spliceosome. SNRPC/U1-C is directly involved in initial 5' splice-site recognition for both constitutive and regulated alternative splicing. The interaction with the 5' splice-site seems to precede base-pairing between the pre-mRNA and the U1 snRNA. Stimulates commitment or early (E) complex formation by stabilizing the base pairing of the 5' end of the U1 snRNA and the 5' splice-site region. The chain is U1 small nuclear ribonucleoprotein C from Xenopus laevis (African clawed frog).